A 398-amino-acid chain; its full sequence is S-adenosylmethionine synthase (398 aa).

An ATP-binding site is contributed by His15. Mg(2+) is bound at residue Asp17. Glu43 contacts K(+). Positions 56 and 99 each coordinate L-methionine. The segment at 99–109 (QSPDIAQGVDT) is flexible loop. Residues 175–177 (DGK), 243–244 (RF), Asp252, 258–259 (RK), Ala275, and Lys279 each bind ATP. Asp252 lines the L-methionine pocket. Lys283 serves as a coordination point for L-methionine.

This sequence belongs to the AdoMet synthase family. As to quaternary structure, homotetramer; dimer of dimers. Requires Mg(2+) as cofactor. K(+) serves as cofactor.

The protein localises to the cytoplasm. It carries out the reaction L-methionine + ATP + H2O = S-adenosyl-L-methionine + phosphate + diphosphate. Its pathway is amino-acid biosynthesis; S-adenosyl-L-methionine biosynthesis; S-adenosyl-L-methionine from L-methionine: step 1/1. In terms of biological role, catalyzes the formation of S-adenosylmethionine (AdoMet) from methionine and ATP. The overall synthetic reaction is composed of two sequential steps, AdoMet formation and the subsequent tripolyphosphate hydrolysis which occurs prior to release of AdoMet from the enzyme. In Parafrankia sp. (strain EAN1pec), this protein is S-adenosylmethionine synthase.